The chain runs to 243 residues: MDPAAFVQALADHGIVLNDHQQDQFAAYYQYLISENEKMNLTGITAEGDVYLKHFYDSLTLALVLPELQTQVMSVCDVGAGAGFPSIPLKIAFPQLKITIVDSLQKRIGFLERLTARLELTDVQLFHDRAEAFGAKKSPHRASFDLVTARAVAALDVLAELCLPLVKPQGRFVAMKAAATPAELIAAKSAIGLLGGKLAQDAALTLPETGDPRHLLVIDKVKPTPNKYPRKPGIPNKQPLGGA.

Residues G79, F84, 130-131 (AE), and R150 contribute to the S-adenosyl-L-methionine site. Residues 222–243 (KPTPNKYPRKPGIPNKQPLGGA) form a disordered region.

The protein belongs to the methyltransferase superfamily. RNA methyltransferase RsmG family.

It is found in the cytoplasm. In terms of biological role, specifically methylates the N7 position of a guanine in 16S rRNA. This Lacticaseibacillus paracasei (strain ATCC 334 / BCRC 17002 / CCUG 31169 / CIP 107868 / KCTC 3260 / NRRL B-441) (Lactobacillus paracasei) protein is Ribosomal RNA small subunit methyltransferase G.